The sequence spans 296 residues: Mycothiol acetyltransferase (296 aa).

N-acetyltransferase domains are found at residues 1 to 148 (MTEW…IRVD) and 151 to 296 (VTVR…YGRA). A 1D-myo-inositol 2-(L-cysteinylamino)-2-deoxy-alpha-D-glucopyranoside-binding site is contributed by E34. Residues 79 to 81 (LVV) and 87 to 92 (RRGIGS) contribute to the acetyl-CoA site. Residues E178, K219, and E229 each contribute to the 1D-myo-inositol 2-(L-cysteinylamino)-2-deoxy-alpha-D-glucopyranoside site. Acetyl-CoA-binding positions include 233–235 (VGV) and 240–246 (QGRGLGH). Y267 contributes to the 1D-myo-inositol 2-(L-cysteinylamino)-2-deoxy-alpha-D-glucopyranoside binding site. 272 to 277 (NQAALR) contacts acetyl-CoA.

Belongs to the acetyltransferase family. MshD subfamily. As to quaternary structure, monomer.

It carries out the reaction 1D-myo-inositol 2-(L-cysteinylamino)-2-deoxy-alpha-D-glucopyranoside + acetyl-CoA = mycothiol + CoA + H(+). In terms of biological role, catalyzes the transfer of acetyl from acetyl-CoA to desacetylmycothiol (Cys-GlcN-Ins) to form mycothiol. In Mycobacteroides abscessus (strain ATCC 19977 / DSM 44196 / CCUG 20993 / CIP 104536 / JCM 13569 / NCTC 13031 / TMC 1543 / L948) (Mycobacterium abscessus), this protein is Mycothiol acetyltransferase.